The primary structure comprises 233 residues: MKYEDINENTIKITLSFDDLTDYDIKLSDFFGNQEVIEQFFYELVDELGLENRFGNVGMLTFQIQPFPQGVHMIVHEEAMLGEGGEIPDDPEEFEELMTGFYNKLNEIGADMARERGITDFKPGLGLPGTKKDEAEQEPDFIYYSIRYEDIMSVLTGIKNVKFADEESEFYRYDGNFYLVVLDNQKEKGKMHVESTRSRMMEYGEATKMSREFLQEYGECLIATRALDVLRKI.

This sequence belongs to the MecA family. In terms of assembly, homodimer.

In terms of biological role, enables the recognition and targeting of unfolded and aggregated proteins to the ClpC protease or to other proteins involved in proteolysis. The sequence is that of Adapter protein MecA from Lactococcus lactis subsp. lactis (strain IL1403) (Streptococcus lactis).